Reading from the N-terminus, the 93-residue chain is Integration host factor subunit beta (93 aa).

Belongs to the bacterial histone-like protein family. In terms of assembly, heterodimer of an alpha and a beta chain.

This protein is one of the two subunits of integration host factor, a specific DNA-binding protein that functions in genetic recombination as well as in transcriptional and translational control. The chain is Integration host factor subunit beta from Aliivibrio salmonicida (strain LFI1238) (Vibrio salmonicida (strain LFI1238)).